A 110-amino-acid chain; its full sequence is MKKMFRSLIRHCLKPELDKLRECEERLSVIEKQKQSSKQESEETYIHIETLNVEKVDYHLEFGELTIDELSGRLNIGATYYIPPEEKDKKCQRKPEAPSTPAVTIRSKRQ.

Positions 16 to 46 (ELDKLRECEERLSVIEKQKQSSKQESEETYI) form a coiled coil. Over residues 85-96 (EEKDKKCQRKPE) the composition is skewed to basic and acidic residues. The tract at residues 85–110 (EEKDKKCQRKPEAPSTPAVTIRSKRQ) is disordered.

This is an uncharacterized protein from Bacillus subtilis (strain 168).